A 280-amino-acid polypeptide reads, in one-letter code: uncharacterized protein (280 aa).

3 consecutive transmembrane segments (helical) span residues Ile15–Leu35, Ile68–Gly88, and Ile94–Ile114.

Belongs to the MscS (TC 1.A.23) family.

The protein localises to the cell membrane. Functionally, may play a role in resistance to osmotic downshock. This is an uncharacterized protein from Bacillus subtilis (strain 168).